The chain runs to 356 residues: 5-amino-6-(D-ribitylamino)uracil--L-tyrosine 4-hydroxyphenyl transferase (356 aa).

The Radical SAM core domain occupies V47–H281. Residues C61, C65, and C68 each contribute to the [4Fe-4S] cluster site.

This sequence belongs to the radical SAM superfamily. CofH family. As to quaternary structure, consists of two subunits, CofG and CofH. The cofactor is [4Fe-4S] cluster.

The enzyme catalyses 5-amino-6-(D-ribitylamino)uracil + L-tyrosine + S-adenosyl-L-methionine = 5-amino-5-(4-hydroxybenzyl)-6-(D-ribitylimino)-5,6-dihydrouracil + 2-iminoacetate + 5'-deoxyadenosine + L-methionine + H(+). The protein operates within cofactor biosynthesis; coenzyme F0 biosynthesis. Functionally, catalyzes the radical-mediated synthesis of 5-amino-5-(4-hydroxybenzyl)-6-(D-ribitylimino)-5,6-dihydrouracil from 5-amino-6-(D-ribitylamino)uracil and L-tyrosine. The sequence is that of 5-amino-6-(D-ribitylamino)uracil--L-tyrosine 4-hydroxyphenyl transferase from Methanococcoides burtonii (strain DSM 6242 / NBRC 107633 / OCM 468 / ACE-M).